The chain runs to 436 residues: Glutamyl-tRNA reductase (436 aa).

Substrate contacts are provided by residues 49–52 (TCNR), Ser-109, 114–116 (EGQ), and Gln-120. The active-site Nucleophile is Cys-50. 198–203 (GAGRMS) is an NADP(+) binding site.

It belongs to the glutamyl-tRNA reductase family. As to quaternary structure, homodimer.

It catalyses the reaction (S)-4-amino-5-oxopentanoate + tRNA(Glu) + NADP(+) = L-glutamyl-tRNA(Glu) + NADPH + H(+). It functions in the pathway porphyrin-containing compound metabolism; protoporphyrin-IX biosynthesis; 5-aminolevulinate from L-glutamyl-tRNA(Glu): step 1/2. Its pathway is porphyrin-containing compound metabolism; chlorophyll biosynthesis. Functionally, catalyzes the NADPH-dependent reduction of glutamyl-tRNA(Glu) to glutamate 1-semialdehyde (GSA). The protein is Glutamyl-tRNA reductase of Prochlorococcus marinus (strain AS9601).